The primary structure comprises 248 residues: Eukaryotic translation initiation factor 6 (248 aa).

This sequence belongs to the eIF-6 family. In terms of assembly, monomer. Associates with the 60S ribosomal subunit.

The protein localises to the cytoplasm. It localises to the nucleus. The protein resides in the nucleolus. Its function is as follows. Binds to the 60S ribosomal subunit and prevents its association with the 40S ribosomal subunit to form the 80S initiation complex in the cytoplasm. May also be involved in ribosome biogenesis. The protein is Eukaryotic translation initiation factor 6 of Trypanosoma cruzi (strain CL Brener).